The following is a 953-amino-acid chain: Coatomer subunit beta (953 aa).

Thr2 bears the N-acetylthreonine mark. HEAT repeat units lie at residues 96–131, 132–168, 240–276, 277–314, 316–353, and 396–433; these read HEMI…KEAE, LLEP…NFEH, SERA…SAPT, AIKA…HPAH, RVLQ…SRNV, and DMAA…RFDN. Position 494 is an N6-acetyllysine (Lys494).

As to quaternary structure, oligomeric complex that consists of at least the alpha, beta, beta', gamma, delta, epsilon and zeta subunits. Interacts with CAPN8. Interacts with SCYL1 and PRKCE. Interacts with COPG1. Interacts with ARF1 (myristoylated); this interaction is required for binding of COPB1 to Golgi membranes. Interacts (via trunk domain) with ARF1 (via switch I region); the interaction is direct. Interacts with KCNK2 (via N-terminus); this interaction increases the channel-mediated whole cell currents and promotes plasma membrane expression of KCNK2. Interacts with STX17. Interacts with TMEM115. Interacts with TMEM41B. Proteolytically cleaved between Ser-528 and Ser-529 by CAPN8. As to expression, predominantly expressed in the upper one-third of the oxyntic mucosa and in most regions of the pyloric mucosa. Ubiquitously expressed including platelet, liver, heart, spleen, lung and kidney.

The protein localises to the cytoplasm. The protein resides in the golgi apparatus membrane. Its subcellular location is the cytoplasmic vesicle. It is found in the COPI-coated vesicle membrane. It localises to the cell membrane. The protein localises to the endoplasmic reticulum-Golgi intermediate compartment. In terms of biological role, the coatomer is a cytosolic protein complex that binds to dilysine motifs and reversibly associates with Golgi non-clathrin-coated vesicles, which further mediate biosynthetic protein transport from the ER, via the Golgi up to the trans Golgi network. Coatomer complex is required for budding from Golgi membranes, and is essential for the retrograde Golgi-to-ER transport of dilysine-tagged proteins. In mammals, the coatomer can only be recruited by membranes associated to ADP-ribosylation factors (ARFs), which are small GTP-binding proteins; the complex also influences the Golgi structural integrity, as well as the processing, activity, and endocytic recycling of LDL receptors. Involved in the Golgi disassembly and reassembly processes during cell cycle. Involved in autophagy by playing a role in early endosome function. Plays a role in organellar compartmentalization of secretory compartments including endoplasmic reticulum (ER)-Golgi intermediate compartment (ERGIC), Golgi, trans-Golgi network (TGN) and recycling endosomes, and in biosynthetic transport of CAV1. Plays a functional role in facilitating the transport of kappa-type opioid receptor mRNAs into axons and enhances translation of these proteins in cortical neurons. Required for limiting lipid storage in lipid droplets. Involved in lipid homeostasis by regulating the presence of perilipin family members PLIN2 and PLIN3 at the lipid droplet surface and promoting the association of adipocyte triglyceride lipase (PNPLA2) with the lipid droplet surface to mediate lipolysis. This chain is Coatomer subunit beta (Copb1), found in Mus musculus (Mouse).